The following is a 559-amino-acid chain: 2-isopropylmalate synthase (559 aa).

One can recognise a Pyruvate carboxyltransferase domain in the interval 33–307 (PIWCSSDLRD…DPQLDFSDID (275 aa)). Mg(2+) is bound by residues D42, H246, H248, and N282. Residues 439–559 (ANTPYALVSH…SLSQQEAKAA (121 aa)) are regulatory domain.

Belongs to the alpha-IPM synthase/homocitrate synthase family. LeuA type 2 subfamily. In terms of assembly, homodimer. The cofactor is Mg(2+).

Its subcellular location is the cytoplasm. The catalysed reaction is 3-methyl-2-oxobutanoate + acetyl-CoA + H2O = (2S)-2-isopropylmalate + CoA + H(+). It functions in the pathway amino-acid biosynthesis; L-leucine biosynthesis; L-leucine from 3-methyl-2-oxobutanoate: step 1/4. Functionally, catalyzes the condensation of the acetyl group of acetyl-CoA with 3-methyl-2-oxobutanoate (2-ketoisovalerate) to form 3-carboxy-3-hydroxy-4-methylpentanoate (2-isopropylmalate). The sequence is that of 2-isopropylmalate synthase from Pseudomonas fluorescens (strain SBW25).